A 513-amino-acid chain; its full sequence is ATP synthase subunit alpha (513 aa).

An ATP-binding site is contributed by 169–176 (GDRQTGKT).

The protein belongs to the ATPase alpha/beta chains family. F-type ATPases have 2 components, CF(1) - the catalytic core - and CF(0) - the membrane proton channel. CF(1) has five subunits: alpha(3), beta(3), gamma(1), delta(1), epsilon(1). CF(0) has three main subunits: a(1), b(2) and c(9-12). The alpha and beta chains form an alternating ring which encloses part of the gamma chain. CF(1) is attached to CF(0) by a central stalk formed by the gamma and epsilon chains, while a peripheral stalk is formed by the delta and b chains.

The protein localises to the cell inner membrane. It carries out the reaction ATP + H2O + 4 H(+)(in) = ADP + phosphate + 5 H(+)(out). Functionally, produces ATP from ADP in the presence of a proton gradient across the membrane. The alpha chain is a regulatory subunit. This Pseudoalteromonas translucida (strain TAC 125) protein is ATP synthase subunit alpha.